Consider the following 25-residue polypeptide: MESIEQRVKKIVAEQLGVAEAEIKA.

Residues 2-25 form the Carrier domain; it reads ESIEQRVKKIVAEQLGVAEAEIKA.

It belongs to the acyl carrier protein (ACP) family. In terms of processing, 4'-phosphopantetheine is transferred from CoA to a specific serine of apo-ACP by AcpS. This modification is essential for activity because fatty acids are bound in thioester linkage to the sulfhydryl of the prosthetic group.

The protein localises to the cytoplasm. Its pathway is lipid metabolism; fatty acid biosynthesis. Functionally, carrier of the growing fatty acid chain in fatty acid biosynthesis. This chain is Acyl carrier protein (acpP), found in Alcaligenes faecalis.